Reading from the N-terminus, the 459-residue chain is Endoglucanase CelA (459 aa).

The first 27 residues, 1 to 27, serve as a signal peptide directing secretion; the sequence is MKRLLALLATGVSIVGLTALAGPPAQA. One can recognise a CBM2 domain in the interval 28 to 134; it reads ATGCKAEYTI…TLNGATCSGS (107 aa). Cysteine 31 and cysteine 131 form a disulfide bridge. Residues 129 to 151 form a disordered region; sequence ATCSGSVTDPPTDPPTDPPATGT. The linker ('hinge') (Pro-Thr box) stretch occupies residues 136 to 147; the sequence is TDPPTDPPTDPP. Residues 148–357 form a catalytic region; that stretch reads ATGTPAAVNG…YAFHFYAASH (210 aa). The active-site Proton donor is the glutamate 286. Glutamate 378 functions as the Nucleophile in the catalytic mechanism.

It belongs to the glycosyl hydrolase 5 (cellulase A) family. The linker region (also termed 'hinge') may be a potential site for proteolysis.

It catalyses the reaction Endohydrolysis of (1-&gt;4)-beta-D-glucosidic linkages in cellulose, lichenin and cereal beta-D-glucans.. The chain is Endoglucanase CelA (celA) from Streptomyces lividans.